The following is a 259-amino-acid chain: DNA-directed RNA polymerase subunit Rpo3 (259 aa).

This sequence belongs to the archaeal Rpo3/eukaryotic RPB3 RNA polymerase subunit family. Part of the RNA polymerase complex.

It is found in the cytoplasm. The enzyme catalyses RNA(n) + a ribonucleoside 5'-triphosphate = RNA(n+1) + diphosphate. Its function is as follows. DNA-dependent RNA polymerase (RNAP) catalyzes the transcription of DNA into RNA using the four ribonucleoside triphosphates as substrates. This chain is DNA-directed RNA polymerase subunit Rpo3, found in Pyrobaculum arsenaticum (strain DSM 13514 / JCM 11321 / PZ6).